Consider the following 626-residue polypeptide: Division abnormally delayed protein (626 aa).

The N-terminal stretch at 1–26 (MAARSVRLAQLLLFTLLCGFVGLSAA) is a signal peptide. A compositionally biased stretch (basic residues) spans 41–52 (LHSATTHHRRRL). Residues 41 to 65 (LHSATTHHRRRLQRDSRAKDAVGGS) are disordered. A glycan (N-linked (GlcNAc...) asparagine; atypical) is linked at N97. 3 N-linked (GlcNAc...) asparagine glycosylation sites follow: N101, N150, and N187. A disordered region spans residues 533–607 (NSIQATHDIQ…GKTSGSNPLE (75 aa)). S549, S569, S573, and S601 each carry an O-linked (Xyl...) (heparan sulfate) serine glycan. The span at 565–575 (GAHGSGDGSGD) shows a compositional bias: gly residues. G602 carries the GPI-anchor amidated glycine lipid modification. Residues 603–626 (SNPLEGTATWMLLTLVTMLFSSCS) constitute a propeptide, removed in mature form.

It belongs to the glypican family. As to quaternary structure, interacts with nord; the interaction promotes dally degradation. Interacts with Magu. As part of the dally/ Magu complex, associates with fwe (isoforms ubi, LoseA and LoseB) and is unable to interact with fwe independently of Magu.

It localises to the cell membrane. In terms of biological role, cell surface proteoglycan that bears heparan sulfate. Functions as a coreceptor for growth factors and morphogens, such as the products of dpp, to regulate signaling and distribution of these ligands. Required for cell division patterning during postembryonic development of the nervous system. Plays a role in dpp/BMP signaling possibly by stabilizing dpp and thereby creating a morphological gradient during wing development. Might have a role in testis development. Functions with magu and fwe in a mechanism of scaling, which utilises apoptosis to ensure that the dpp patterning gradient remains proportional to the size of the growing wing. In this mechanism, fwe represses dally and Magu-dependent activity in expanding the gradient, and dally/Magu inhibits fwe-dependent apoptosis to keep cell death rate low. When the levels of these different proteins are optimally regulated the gradient correctly scales with organ growth but when this fails, fwe-mediated apoptosis is activated to trim the developing tissue to match the correct size of the gradient. The polypeptide is Division abnormally delayed protein (dally) (Drosophila melanogaster (Fruit fly)).